We begin with the raw amino-acid sequence, 206 residues long: Small ribosomal subunit protein uS4 (206 aa).

Residues R96–D157 enclose the S4 RNA-binding domain.

It belongs to the universal ribosomal protein uS4 family. In terms of assembly, part of the 30S ribosomal subunit. Contacts protein S5. The interaction surface between S4 and S5 is involved in control of translational fidelity.

Its function is as follows. One of the primary rRNA binding proteins, it binds directly to 16S rRNA where it nucleates assembly of the body of the 30S subunit. Functionally, with S5 and S12 plays an important role in translational accuracy. This chain is Small ribosomal subunit protein uS4, found in Thioalkalivibrio sulfidiphilus (strain HL-EbGR7).